A 399-amino-acid chain; its full sequence is C-type lectin domain family 4 member M (399 aa).

Over 1–49 (MSDSKEQRVQPLGLLEEDPTTSGIRLFPRDFQFQQTHGHKSSTGCLGHG) the chain is Cytoplasmic. Residues 14–15 (LL) carry the Endocytosis signal motif. The helical; Signal-anchor for type II membrane protein transmembrane segment at 50-70 (PLVLQLLSFTLLAGVLVAILV) threads the bilayer. Residues 71-399 (QVYKVPSSLS…KKPTACFRDE (329 aa)) are Extracellular-facing. Residue N92 is glycosylated (N-linked (GlcNAc...) asparagine). Repeat copies occupy residues 108 to 130 (KLQE…PEKS), 131 to 153 (TLQE…PEKS), 154 to 176 (RLQE…PEKS), 177 to 199 (KQQE…PEKS), 200 to 222 (KQQE…PEKS), 223 to 245 (KQQE…PDQS), and 246 to 268 (KQQQ…CCRC). Residues 108-269 (KLQEIYQELI…AFERLCCRCP (162 aa)) form a 7 X approximate tandem repeats region. 4 cysteine pairs are disulfide-bonded: C265–C395, C268–C279, C296–C389, and C368–C381. A C-type lectin domain is found at 274–390 (FFQGNCYFIS…CNVDNYWICK (117 aa)). Positions 359, 361, 363, 366, 377, and 378 each coordinate Ca(2+). N361 is a glycosylation site (N-linked (GlcNAc...) asparagine).

As to quaternary structure, homotetramer.

Its subcellular location is the membrane. Probable pathogen-recognition receptor involved in peripheral immune surveillance in liver. May mediate the endocytosis of pathogens which are subsequently degraded in lysosomal compartments. Probably recognizes in a calcium-dependent manner high mannose N-linked oligosaccharides in a variety of pathogen antigens. Is a receptor for ICAM3, probably by binding to mannose-like carbohydrates. The chain is C-type lectin domain family 4 member M (CLEC4M) from Hylobates lar (Lar gibbon).